We begin with the raw amino-acid sequence, 215 residues long: Probable nicotinate-nucleotide adenylyltransferase (215 aa).

The protein belongs to the NadD family.

It carries out the reaction nicotinate beta-D-ribonucleotide + ATP + H(+) = deamido-NAD(+) + diphosphate. It functions in the pathway cofactor biosynthesis; NAD(+) biosynthesis; deamido-NAD(+) from nicotinate D-ribonucleotide: step 1/1. Catalyzes the reversible adenylation of nicotinate mononucleotide (NaMN) to nicotinic acid adenine dinucleotide (NaAD). The polypeptide is Probable nicotinate-nucleotide adenylyltransferase (Fervidobacterium nodosum (strain ATCC 35602 / DSM 5306 / Rt17-B1)).